Here is a 310-residue protein sequence, read N- to C-terminus: Upstream stimulatory factor 1 (310 aa).

Residues 1-17 (MKGQQKTAETEEGTVQI) show a composition bias toward polar residues. 2 disordered regions span residues 1 to 26 (MKGQ…ATGE) and 171 to 209 (QGGS…EVER). Basic and acidic residues predominate over residues 190 to 209 (EAPRTTRDEKRRAQHNEVER). A bHLH domain is found at 199–254 (KRRAQHNEVERRRRDKINNWIVQLSKIIPDCSMESTKSGQSKGGILSKACDYIQEL). The segment at 271–292 (LQLDNDVLRQQVEDLKNKNLLL) is leucine-zipper. Lys-306 participates in a covalent cross-link: Glycyl lysine isopeptide (Lys-Gly) (interchain with G-Cter in SUMO2).

As to quaternary structure, efficient DNA binding requires dimerization with another bHLH protein. Binds DNA as a homodimer or a heterodimer (USF1/USF2).

Its subcellular location is the nucleus. Functionally, transcription factor that binds to a symmetrical DNA sequence (E-boxes) (5'-CACGTG-3') that is found in a variety of viral and cellular promoters. The protein is Upstream stimulatory factor 1 (USF1) of Bos taurus (Bovine).